The following is a 568-amino-acid chain: Lariat debranching enzyme (568 aa).

4 residues coordinate a divalent metal cation: cysteine 8, histidine 10, aspartate 39, and asparagine 84. Positions 124–154 are lariat recognition loop; that stretch reads SGIFKSHDFKKGHFEFPPYNPETLRSVYHIR. Histidine 174, histidine 226, and histidine 228 together coordinate a divalent metal cation. A disordered region spans residues 388 to 568; the sequence is IYGERGGKGA…TAVEDEESDS (181 aa). Residues 417 to 428 show a composition bias toward polar residues; sequence PSDTSGLSSSYN. The span at 432–444 shows a compositional bias: acidic residues; the sequence is ITIEDEWEEEEDG. Residues 467–480 show a composition bias toward basic and acidic residues; the sequence is DSDRDSSPQRETAK. Position 478 is a phosphothreonine (threonine 478). Residues 534-549 are compositionally biased toward low complexity; sequence GETTQSSAGQTGGTPQ. Residue serine 568 is modified to Phosphoserine.

The protein belongs to the lariat debranching enzyme family. Requires Fe(2+) as cofactor. Zn(2+) is required as a cofactor. Mn(2+) serves as cofactor.

It is found in the nucleus. With respect to regulation, active in presence of diverse metals including Fe(2+), Zn(2+), Mn(2+). Also activated by Ca(2+). Binds two metal cations in two adjacent alpha and beta metal-binding pockets. Functionally, cleaves the 2'-5' phosphodiester linkage at the branch point of excised lariat intron RNA and converts them into linear molecules that can be subsequently degraded, thereby facilitating ribonucleotide turnover. Linked to its role in pre-mRNA processing mechanism, may also participate in retrovirus replication and have an antiviral cell-intrinsic defense function. The protein is Lariat debranching enzyme (dbr1) of Danio rerio (Zebrafish).